The sequence spans 287 residues: uncharacterized protein (287 aa).

This sequence belongs to the AllH family.

This is an uncharacterized protein from Escherichia coli (strain K12).